Reading from the N-terminus, the 65-residue chain is MRTFLFLFAVLFFLTPAKNEFFDEKCGKLKGTCKNNCGKNEELIALCQKSLKCCRTIQPCGSIID.

Positions 1–20 (MRTFLFLFAVLFFLTPAKNE) are cleaved as a signal peptide. Intrachain disulfides connect cysteine 26/cysteine 53, cysteine 33/cysteine 47, and cysteine 37/cysteine 54.

Belongs to the beta-defensin family. In terms of assembly, monomer. Interacts with CCR2 (via extracellular N-terminal region); this interaction may preferentially require specific tyrosine sulfation on CCR2.

The protein localises to the secreted. It localises to the membrane. In terms of biological role, has antibacterial activity. Acts as a ligand for C-C chemokine receptor CCR2. The chain is Beta-defensin 106A (DEFB106A) from Pongo pygmaeus (Bornean orangutan).